We begin with the raw amino-acid sequence, 193 residues long: Imidazoleglycerol-phosphate dehydratase (193 aa).

This sequence belongs to the imidazoleglycerol-phosphate dehydratase family.

Its subcellular location is the cytoplasm. The catalysed reaction is D-erythro-1-(imidazol-4-yl)glycerol 3-phosphate = 3-(imidazol-4-yl)-2-oxopropyl phosphate + H2O. It participates in amino-acid biosynthesis; L-histidine biosynthesis; L-histidine from 5-phospho-alpha-D-ribose 1-diphosphate: step 6/9. The sequence is that of Imidazoleglycerol-phosphate dehydratase from Methanoculleus marisnigri (strain ATCC 35101 / DSM 1498 / JR1).